We begin with the raw amino-acid sequence, 132 residues long: Large ribosomal subunit protein bL19 (132 aa).

It belongs to the bacterial ribosomal protein bL19 family.

Its function is as follows. This protein is located at the 30S-50S ribosomal subunit interface and may play a role in the structure and function of the aminoacyl-tRNA binding site. This is Large ribosomal subunit protein bL19 from Rhodospirillum centenum (strain ATCC 51521 / SW).